The primary structure comprises 928 residues: Neuropilin-1 (928 aa).

The first 21 residues, 1–21 (MLLRLLSCCCWLLCSLRSSWA), serve as a signal peptide directing secretion. Residues 22 to 860 (SRNDKCGDTI…PGNVLKTLDP (839 aa)) lie on the Extracellular side of the membrane. Disulfide bonds link Cys-27–Cys-54, Cys-82–Cys-104, and Cys-147–Cys-173. CUB domains follow at residues 27–141 (CGDT…YEVF) and 147–265 (CSRN…FSVV). N-linked (GlcNAc...) asparagine glycosylation occurs at Asn-150. Ca(2+)-binding residues include Glu-195, Asp-209, and Asp-250. Cys-206 and Cys-228 are oxidised to a cystine. Asn-261, Asn-300, and Asn-523 each carry an N-linked (GlcNAc...) asparagine glycan. Intrachain disulfides connect Cys-275–Cys-424 and Cys-431–Cys-584. 2 F5/8 type C domains span residues 275 to 424 (CKEA…LYGC) and 431 to 584 (CSRM…LLGC). Ser-613 carries O-linked (Xyl...) (chondroitin sulfate) serine; alternate glycosylation. The O-linked (Xyl...) (heparan sulfate) serine; alternate glycan is linked to Ser-613. The interval 624-645 (GATGQSTETPTVEASPEEPDMT) is disordered. Over residues 625 to 635 (ATGQSTETPTV) the composition is skewed to polar residues. Residues 646-812 (HSDLDCKFGW…NHISPSQCRA (167 aa)) form the MAM domain. A glycan (O-linked (Xyl...) (chondroitin sulfate) serine) is linked at Ser-834. The N-linked (GlcNAc...) asparagine glycan is linked to Asn-844. The helical transmembrane segment at 861 to 883 (ILITIIAMSALGVLLGAICGVVL) threads the bilayer. Residues 884–928 (YCACWHNGMSERNLSALENYNFELVDGVKLKKDKLNTQNSYSEAS) are Cytoplasmic-facing.

The protein belongs to the neuropilin family. Homodimer, and heterodimer. Retinal ganglion cells and visual center neurons.

It is found in the mitochondrion membrane. The protein resides in the cell membrane. In terms of biological role, receptor involved in the development of the cardiovascular system, in angiogenesis, in the formation of certain neuronal circuits and in organogenesis outside the nervous system. Mediates the chemorepulsant activity of semaphorins. Binding to VEGFA initiates a signaling pathway needed for motor neuron axon guidance and cell body migration, including for the caudal migration of facial motor neurons from rhombomere 4 to rhombomere 6 during embryonic development. Regulates mitochondrial iron transport via interaction. The sequence is that of Neuropilin-1 (nrp1) from Xenopus laevis (African clawed frog).